The following is a 588-amino-acid chain: MTGEMVNYYKQIVLLSGLEYMNDYNFRALKSLLNHDLKLTKNMQDDYDRIKIADLMEEKFPEDAGLSKLIEVCEDIPELAARVDILRKEMEKVKNKTKIKSESSPLPLTSSLMEAWEVEPAMVTASSEESKDTIPESPDTMTTQFLEEKPKFPLLSATSTSQAEGEPLTPQRFPTTASSSLQTPLEPTEILSTILATSQGSSAPYSTCDKSSRVPPVTVSSSLQTIQTCQATSTLPCSHHTSLESPKTEPSSVQATQMTQAIKASGHNCPQVPASAVSSSFIKPQVTPAMLLSGVQTPLMPQATVPSRAQTFQLTPAKMTSGCNSPQMSAATVYSSYSNPQVTPVHSSVQILQMNLAAMTIGCNSPHVSAATVSSPYNNPWVTPATFPRNAQTLQLYPAAMAHACNSPQVSAATISSSYNNTPQVSSVTVPRSFPAMSLSPAKPLKAKIGSHLGATDQLVKDHQFEDNEMQNPQSGLGTGLSDQPRLSRTQSRTEKRRRKQEEQPLATKMKRLSLSPPQTTARRVNPMPTWGQLKKLTREAEGLVQRTGNKLSSETMFLAMLALIAMQSSSEICNYDKGGHSGTSSEK.

One can recognise a Pyrin domain in the interval 5–92 (MVNYYKQIVL…VDILRKEMEK (88 aa)). 2 disordered regions span residues 157–183 (ATST…SLQT) and 469–526 (EMQN…RRVN). Polar residues-rich tracts occupy residues 172–183 (RFPTTASSSLQT) and 470–487 (MQNP…QPRL).

Belongs to the HIN-200 family.

This chain is Interferon-activable protein 208, found in Mus musculus (Mouse).